We begin with the raw amino-acid sequence, 328 residues long: Malate dehydrogenase (328 aa).

11–17 (GAAGQIG) is an NAD(+) binding site. Substrate is bound by residues Arg94 and Arg100. NAD(+) is bound by residues Asn107, Gln114, and 131–133 (VGN). 2 residues coordinate substrate: Asn133 and Arg164. His189 functions as the Proton acceptor in the catalytic mechanism.

The protein belongs to the LDH/MDH superfamily. MDH type 2 family.

The catalysed reaction is (S)-malate + NAD(+) = oxaloacetate + NADH + H(+). Catalyzes the reversible oxidation of malate to oxaloacetate. The polypeptide is Malate dehydrogenase (Xylella fastidiosa (strain 9a5c)).